A 117-amino-acid polypeptide reads, in one-letter code: MGINNINKIPVRNNKISFVAVHLIKALTSKKQEKLVKLQRKKKIISVIKTWSRSSTIVPLMIGEIIAVHNGREHIPVYITEEMVGFKLGEFATTRIWRGHLKKTTHKKNNKTYGLYF.

This sequence belongs to the universal ribosomal protein uS19 family.

It localises to the plastid. Protein S19 forms a complex with S13 that binds strongly to the 16S ribosomal RNA. The polypeptide is Small ribosomal subunit protein uS19c (rps19) (Helicosporidium sp. subsp. Simulium jonesii (Green alga)).